The chain runs to 103 residues: Large ribosomal subunit protein bL21 (103 aa).

Belongs to the bacterial ribosomal protein bL21 family. As to quaternary structure, part of the 50S ribosomal subunit. Contacts protein L20.

In terms of biological role, this protein binds to 23S rRNA in the presence of protein L20. This chain is Large ribosomal subunit protein bL21, found in Acidovorax sp. (strain JS42).